Here is a 195-residue protein sequence, read N- to C-terminus: Protein GrpE (195 aa).

This sequence belongs to the GrpE family. As to quaternary structure, homodimer.

Its subcellular location is the cytoplasm. Participates actively in the response to hyperosmotic and heat shock by preventing the aggregation of stress-denatured proteins, in association with DnaK and GrpE. It is the nucleotide exchange factor for DnaK and may function as a thermosensor. Unfolded proteins bind initially to DnaJ; upon interaction with the DnaJ-bound protein, DnaK hydrolyzes its bound ATP, resulting in the formation of a stable complex. GrpE releases ADP from DnaK; ATP binding to DnaK triggers the release of the substrate protein, thus completing the reaction cycle. Several rounds of ATP-dependent interactions between DnaJ, DnaK and GrpE are required for fully efficient folding. In Francisella tularensis subsp. holarctica (strain OSU18), this protein is Protein GrpE.